Reading from the N-terminus, the 141-residue chain is 3-hydroxyacyl-[acyl-carrier-protein] dehydratase FabZ (141 aa).

Residue His-47 is part of the active site.

The protein belongs to the thioester dehydratase family. FabZ subfamily.

It localises to the cytoplasm. The enzyme catalyses a (3R)-hydroxyacyl-[ACP] = a (2E)-enoyl-[ACP] + H2O. In terms of biological role, involved in unsaturated fatty acids biosynthesis. Catalyzes the dehydration of short chain beta-hydroxyacyl-ACPs and long chain saturated and unsaturated beta-hydroxyacyl-ACPs. This chain is 3-hydroxyacyl-[acyl-carrier-protein] dehydratase FabZ, found in Caldanaerobacter subterraneus subsp. tengcongensis (strain DSM 15242 / JCM 11007 / NBRC 100824 / MB4) (Thermoanaerobacter tengcongensis).